The chain runs to 421 residues: MTKSIQAIRGMSDTLPEEIPYWSFLENACRSVVSAYHYREIRFPVVEQTALFKRTIGEATDIVEKEMYTFTDRNGDSLTLRPEGTAGCVRAGIQNGLLYNQIQRLWYLGPMFRHERPQKGRYRQFYQLGVETYGMAGAPIEAELIFMCLRLWKALGLESCIHLELNTLGTLDSRNAYRQALVTYLQSREKELDEDSRRRLHTNPLRILDSKNPDLQPLLAEAPKLIDYLDETSRRHFDQLRSLLDQAEVPFIVNPTLVRGLDYYTHTVFEWVTDQLGAQGTVCAGGRYDNLVELLGGKSTPAAGFAAGLERLVLLLRGVQECLDKIDIYVVIAGEAVIQEGLLMTEQLRNVLPEWVIEADLSGSSLKSQFKRADKSGAKWALVIAEEEIKTNTVTLKHLRETVPQKSLTRDTLIPYLKSEG.

Belongs to the class-II aminoacyl-tRNA synthetase family. In terms of assembly, homodimer.

Its subcellular location is the cytoplasm. It catalyses the reaction tRNA(His) + L-histidine + ATP = L-histidyl-tRNA(His) + AMP + diphosphate + H(+). In Coxiella burnetii (strain CbuK_Q154) (Coxiella burnetii (strain Q154)), this protein is Histidine--tRNA ligase.